The sequence spans 187 residues: GTP cyclohydrolase 1 (187 aa).

Zn(2+) contacts are provided by Cys76, His79, and Cys148.

Belongs to the GTP cyclohydrolase I family. As to quaternary structure, toroid-shaped homodecamer, composed of two pentamers of five dimers.

The catalysed reaction is GTP + H2O = 7,8-dihydroneopterin 3'-triphosphate + formate + H(+). It functions in the pathway cofactor biosynthesis; 7,8-dihydroneopterin triphosphate biosynthesis; 7,8-dihydroneopterin triphosphate from GTP: step 1/1. The polypeptide is GTP cyclohydrolase 1 (Streptococcus thermophilus (strain CNRZ 1066)).